Reading from the N-terminus, the 44-residue chain is Putative keratin-associated protein 20-4 (44 aa).

Belongs to the KRTAP type 20 family. In terms of assembly, interacts with hair keratins.

In the hair cortex, hair keratin intermediate filaments are embedded in an interfilamentous matrix, consisting of hair keratin-associated proteins (KRTAP), which are essential for the formation of a rigid and resistant hair shaft through their extensive disulfide bond cross-linking with abundant cysteine residues of hair keratins. The matrix proteins include the high-sulfur and high-glycine-tyrosine keratins. The chain is Putative keratin-associated protein 20-4 (KRTAP20-4) from Homo sapiens (Human).